Reading from the N-terminus, the 65-residue chain is uncharacterized protein (65 aa).

Residues 1–30 are disordered; that stretch reads MPAASLESLLPPPPGKLPSPPLRPHGKFQR. The span at 10–23 shows a compositional bias: pro residues; sequence LPPPPGKLPSPPLR.

This is an uncharacterized protein from Homo sapiens (Human).